Here is a 358-residue protein sequence, read N- to C-terminus: Peptide chain release factor 1 (358 aa).

An N5-methylglutamine modification is found at Q235. Residues 284 to 309 (KVESERSASRKSQVGSGDRSERIRTY) are disordered.

It belongs to the prokaryotic/mitochondrial release factor family. Methylated by PrmC. Methylation increases the termination efficiency of RF1.

The protein localises to the cytoplasm. Peptide chain release factor 1 directs the termination of translation in response to the peptide chain termination codons UAG and UAA. This is Peptide chain release factor 1 from Bartonella tribocorum (strain CIP 105476 / IBS 506).